The primary structure comprises 514 residues: tRNA-2-methylthio-N(6)-dimethylallyladenosine synthase (514 aa).

An MTTase N-terminal domain is found at 68–186; sequence RTFLIKTYGC…LPEILEEAYL (119 aa). Residues C77, C113, C147, C223, C227, and C230 each contribute to the [4Fe-4S] cluster site. Positions 209–439 constitute a Radical SAM core domain; that stretch reads REGSTKAWVN…NKKVGHYSEK (231 aa). A TRAM domain is found at 442–505; it reads NQYEGKTVTV…QYSLNGTFKE (64 aa).

Belongs to the methylthiotransferase family. MiaB subfamily. In terms of assembly, monomer. [4Fe-4S] cluster is required as a cofactor.

It localises to the cytoplasm. It catalyses the reaction N(6)-dimethylallyladenosine(37) in tRNA + (sulfur carrier)-SH + AH2 + 2 S-adenosyl-L-methionine = 2-methylsulfanyl-N(6)-dimethylallyladenosine(37) in tRNA + (sulfur carrier)-H + 5'-deoxyadenosine + L-methionine + A + S-adenosyl-L-homocysteine + 2 H(+). Catalyzes the methylthiolation of N6-(dimethylallyl)adenosine (i(6)A), leading to the formation of 2-methylthio-N6-(dimethylallyl)adenosine (ms(2)i(6)A) at position 37 in tRNAs that read codons beginning with uridine. The protein is tRNA-2-methylthio-N(6)-dimethylallyladenosine synthase of Staphylococcus haemolyticus (strain JCSC1435).